The primary structure comprises 220 residues: Chaperone protein TorD (220 aa).

The protein belongs to the TorD/DmsD family. TorD subfamily.

It is found in the cytoplasm. Involved in the biogenesis of TorA. Acts on TorA before the insertion of the molybdenum cofactor and, as a result, probably favors a conformation of the apoenzyme that is competent for acquiring the cofactor. This is Chaperone protein TorD from Vibrio cholerae serotype O1 (strain M66-2).